Reading from the N-terminus, the 200-residue chain is MRYGGVDEAGRGPIIGPMVIALVIGDSGYLKELGVKDSKLLTKEQREELFNEIVKNSLVKYEIVSPSLIDRYNLNELEAKVTANLINSIEDEISHIVIDSPERPENYKLRILKYLKKRVKIITKNKGEEDPLVAAASIVAKVIRDREIEKIKEQTGIDFGSGYPSDKRTRKALEQYYRILKPYIRKKWPFEINKKLTDFI.

One can recognise an RNase H type-2 domain in the interval 1–200 (MRYGGVDEAG…EINKKLTDFI (200 aa)). D7, E8, and D99 together coordinate a divalent metal cation.

Belongs to the RNase HII family. Requires Mn(2+) as cofactor. Mg(2+) serves as cofactor.

The protein localises to the cytoplasm. The catalysed reaction is Endonucleolytic cleavage to 5'-phosphomonoester.. Endonuclease that specifically degrades the RNA of RNA-DNA hybrids. The sequence is that of Ribonuclease HII from Nanoarchaeum equitans (strain Kin4-M).